Reading from the N-terminus, the 171-residue chain is NADH-quinone oxidoreductase subunit B 1 (171 aa).

The [4Fe-4S] cluster site is built by C44, C45, C110, and C139.

It belongs to the complex I 20 kDa subunit family. In terms of assembly, NDH-1 is composed of 14 different subunits. Subunits NuoB, C, D, E, F, and G constitute the peripheral sector of the complex. It depends on [4Fe-4S] cluster as a cofactor.

It localises to the cell inner membrane. The catalysed reaction is a quinone + NADH + 5 H(+)(in) = a quinol + NAD(+) + 4 H(+)(out). Its function is as follows. NDH-1 shuttles electrons from NADH, via FMN and iron-sulfur (Fe-S) centers, to quinones in the respiratory chain. The immediate electron acceptor for the enzyme in this species is believed to be ubiquinone. Couples the redox reaction to proton translocation (for every two electrons transferred, four hydrogen ions are translocated across the cytoplasmic membrane), and thus conserves the redox energy in a proton gradient. The sequence is that of NADH-quinone oxidoreductase subunit B 1 from Opitutus terrae (strain DSM 11246 / JCM 15787 / PB90-1).